A 339-amino-acid chain; its full sequence is Uroporphyrinogen decarboxylase (339 aa).

Substrate contacts are provided by residues 21–25 (RQAGR), Asp71, Tyr147, Ser202, and His315.

It belongs to the uroporphyrinogen decarboxylase family. As to quaternary structure, homodimer.

The protein localises to the cytoplasm. The catalysed reaction is uroporphyrinogen III + 4 H(+) = coproporphyrinogen III + 4 CO2. The protein operates within porphyrin-containing compound metabolism; protoporphyrin-IX biosynthesis; coproporphyrinogen-III from 5-aminolevulinate: step 4/4. Functionally, catalyzes the decarboxylation of four acetate groups of uroporphyrinogen-III to yield coproporphyrinogen-III. This chain is Uroporphyrinogen decarboxylase, found in Helicobacter acinonychis (strain Sheeba).